Here is a 506-residue protein sequence, read N- to C-terminus: Nondiscriminating glutamyl-tRNA synthetase EARS2, mitochondrial (506 aa).

The transit peptide at 1-41 (MAALLRRLLQRGRPLAASGRRVGRREARLGTGPGVAVRVRF) directs the protein to the mitochondrion. 40 to 42 (RFA) is a binding site for L-glutamate. The short motif at 45–53 (PTGFLHLGG) is the 'HIGH' region element. His50 contacts ATP. Residues Glu76, 228-232 (YHLAC), and Arg246 contribute to the L-glutamate site. Glu249 is a binding site for ATP. N6-succinyllysine is present on Lys256. Position 284 to 288 (284 to 288 (KLSKR)) interacts with ATP. The short motif at 284–288 (KLSKR) is the 'KMSKS' region element. Lys486 is modified (N6-acetyllysine).

This sequence belongs to the class-I aminoacyl-tRNA synthetase family. Glutamate--tRNA ligase type 1 subfamily.

The protein resides in the mitochondrion matrix. It catalyses the reaction tRNA(Glx) + L-glutamate + ATP = L-glutamyl-tRNA(Glx) + AMP + diphosphate. The enzyme catalyses tRNA(Glu) + L-glutamate + ATP = L-glutamyl-tRNA(Glu) + AMP + diphosphate. The catalysed reaction is tRNA(Gln) + L-glutamate + ATP = L-glutamyl-tRNA(Gln) + AMP + diphosphate. Functionally, non-discriminating glutamyl-tRNA synthetase that catalyzes aminoacylation of both mitochondrial tRNA(Glu) and tRNA(Gln) and participates in RNA aminoacylation for mitochondrial protein translation. Attachs glutamate to tRNA(Glu) or tRNA(Gln) in a two-step reaction: glutamate is first activated by ATP to form Glu-AMP and then transferred to the acceptor end of tRNA(Glu) or tRNA(Gln). In vitro, cytoplasmic tRNA(Gln) is slightly glutamylated, but with low activity. This is Nondiscriminating glutamyl-tRNA synthetase EARS2, mitochondrial from Macaca fascicularis (Crab-eating macaque).